We begin with the raw amino-acid sequence, 313 residues long: Protein EMSY-LIKE 2 (313 aa).

Residues 1–88 (MEAQIHILEQ…HQSLDVHPSP (88 aa)) enclose the ENT domain. Positions 35 to 58 (MTNLRKELRISDDENRQLLNNVHN) form a coiled coil. 2 disordered regions span residues 84–106 (VHPS…YPSI) and 195–229 (LNVG…REHL). The span at 206-219 (GNRRTLSHGGRGRG) shows a compositional bias: basic residues. Residues 267–293 (HELDKAKKLLKEHEQALIAAIARLTDA) adopt a coiled-coil conformation. A Phosphoserine modification is found at Ser294. The tract at residues 294 to 313 (SDYESDGEEPYSHELPMLLG) is disordered.

Interacts with EDM2 in nucleus.

It is found in the nucleus. Its function is as follows. Probably involved in the regulation of chromatin states. Contributes to RPP7-mediated and basal immunity, especially against Hyaloperonospora arabidopsidis isolate Hiks1. Regulates negatively EDM2-dependent floral transition. This chain is Protein EMSY-LIKE 2, found in Arabidopsis thaliana (Mouse-ear cress).